Reading from the N-terminus, the 130-residue chain is MKDVVVVVTGLAAMEPLTARRMMVGRTAAETTTTGTWTTVHILASMAARRASMTMTTHLRSRVRRIPTRPPRAPRLSVGGGGGTGTAPPARQASPETATIGTRTIGPSKGRRRRRRRMRRRRRRPVTSSC.

The interval 61 to 130 (SRVRRIPTRP…RRRRPVTSSC (70 aa)) is disordered. Positions 109–130 (KGRRRRRRRMRRRRRRPVTSSC) are enriched in basic residues.

As to quaternary structure, interacts with 60S ribosome assembly factors GTPBP4 and MRTO4.

The protein localises to the nucleus. The protein resides in the nucleolus. Its function is as follows. Acts as a late-stage inhibitor of pre-60S ribosome assembly by preventing pre-60S ribosome export from nucleus. This is Ribosome biogenesis inhibitor MINAS-60 from Homo sapiens (Human).